The sequence spans 261 residues: MSDTPQLVVHRDKELMAEAAAARLITKIVDAQASRGSASVVLTGGRNGNGLLAALAGSPARDAIDWSRLDLWWGDERFLPEGDPERNVTQAQQALLDSVPLDPKRVHAMAASDGPYGSDVEAAAAAYAQELATASVPENHAAVPSFDVLLLGVGPDTHVASLFPEHPGVRETERTVIGVHGSPKPPPIRISLTLPAIRAAREVWLLAAGEDKANAVAMALSGAGEIQAPAAGARGRARTLWLLDSAAASQLPRSLYPPASA.

The protein belongs to the glucosamine/galactosamine-6-phosphate isomerase family. 6-phosphogluconolactonase subfamily.

It catalyses the reaction 6-phospho-D-glucono-1,5-lactone + H2O = 6-phospho-D-gluconate + H(+). It participates in carbohydrate degradation; pentose phosphate pathway; D-ribulose 5-phosphate from D-glucose 6-phosphate (oxidative stage): step 2/3. Its function is as follows. Hydrolysis of 6-phosphogluconolactone to 6-phosphogluconate. The sequence is that of 6-phosphogluconolactonase (pgl) from Streptomyces coelicolor (strain ATCC BAA-471 / A3(2) / M145).